The sequence spans 347 residues: Dihydroorotase (347 aa).

Zn(2+) contacts are provided by histidine 14 and histidine 16. Residues 16–18 and asparagine 42 contribute to the substrate site; that span reads HLR. The Zn(2+) site is built by lysine 100, histidine 137, and histidine 175. At lysine 100 the chain carries N6-carboxylysine. Histidine 137 is a substrate binding site. Leucine 220 lines the substrate pocket. Aspartate 248 serves as a coordination point for Zn(2+). Aspartate 248 is a catalytic residue. 2 residues coordinate substrate: histidine 252 and alanine 264.

This sequence belongs to the metallo-dependent hydrolases superfamily. DHOase family. Class II DHOase subfamily. As to quaternary structure, homodimer. Zn(2+) serves as cofactor.

The catalysed reaction is (S)-dihydroorotate + H2O = N-carbamoyl-L-aspartate + H(+). It functions in the pathway pyrimidine metabolism; UMP biosynthesis via de novo pathway; (S)-dihydroorotate from bicarbonate: step 3/3. Functionally, catalyzes the reversible cyclization of carbamoyl aspartate to dihydroorotate. This is Dihydroorotase from Pseudomonas syringae pv. tomato (strain ATCC BAA-871 / DC3000).